A 143-amino-acid polypeptide reads, in one-letter code: uncharacterized protein (143 aa).

Residues 111–143 form a disordered region; it reads VTQDISHTSGKSPTPKAKSSSPKKSKKKNWIPL. The span at 119 to 130 shows a compositional bias: low complexity; it reads SGKSPTPKAKSS. A compositionally biased stretch (basic residues) spans 131–143; that stretch reads SPKKSKKKNWIPL.

The protein belongs to the chlamydial CPn_0742/CT_635/TC_0003 family.

This is an uncharacterized protein from Chlamydia muridarum (strain MoPn / Nigg).